We begin with the raw amino-acid sequence, 263 residues long: Tryptophan synthase alpha chain (263 aa).

Catalysis depends on proton acceptor residues Glu-49 and Asp-60.

The protein belongs to the TrpA family. Tetramer of two alpha and two beta chains.

It catalyses the reaction (1S,2R)-1-C-(indol-3-yl)glycerol 3-phosphate + L-serine = D-glyceraldehyde 3-phosphate + L-tryptophan + H2O. Its pathway is amino-acid biosynthesis; L-tryptophan biosynthesis; L-tryptophan from chorismate: step 5/5. The alpha subunit is responsible for the aldol cleavage of indoleglycerol phosphate to indole and glyceraldehyde 3-phosphate. This Cereibacter sphaeroides (strain KD131 / KCTC 12085) (Rhodobacter sphaeroides) protein is Tryptophan synthase alpha chain.